A 141-amino-acid chain; its full sequence is uncharacterized protein (141 aa).

This is an uncharacterized protein from Escherichia coli (strain K12).